We begin with the raw amino-acid sequence, 449 residues long: Ribulose bisphosphate carboxylase large chain (449 aa).

An N6,N6,N6-trimethyllysine modification is found at K5. N114 and T164 together coordinate substrate. K166 (proton acceptor) is an active-site residue. Residue K168 coordinates substrate. Mg(2+)-binding residues include K192, D194, and E195. K192 is modified (N6-carboxylysine). H285 (proton acceptor) is an active-site residue. Residues R286, H318, and S370 each contribute to the substrate site.

It belongs to the RuBisCO large chain family. Type I subfamily. In terms of assembly, heterohexadecamer of 8 large chains and 8 small chains; disulfide-linked. The disulfide link is formed within the large subunit homodimers. It depends on Mg(2+) as a cofactor. In terms of processing, the disulfide bond which can form in the large chain dimeric partners within the hexadecamer appears to be associated with oxidative stress and protein turnover.

The protein resides in the plastid. Its subcellular location is the chloroplast. It carries out the reaction 2 (2R)-3-phosphoglycerate + 2 H(+) = D-ribulose 1,5-bisphosphate + CO2 + H2O. It catalyses the reaction D-ribulose 1,5-bisphosphate + O2 = 2-phosphoglycolate + (2R)-3-phosphoglycerate + 2 H(+). Its function is as follows. RuBisCO catalyzes two reactions: the carboxylation of D-ribulose 1,5-bisphosphate, the primary event in carbon dioxide fixation, as well as the oxidative fragmentation of the pentose substrate in the photorespiration process. Both reactions occur simultaneously and in competition at the same active site. The polypeptide is Ribulose bisphosphate carboxylase large chain (Zamioculcas zamiifolia (Aroid palm)).